The primary structure comprises 157 residues: 2-C-methyl-D-erythritol 2,4-cyclodiphosphate synthase (157 aa).

2 residues coordinate a divalent metal cation: aspartate 8 and histidine 10. 4-CDP-2-C-methyl-D-erythritol 2-phosphate contacts are provided by residues 8–10 (DVH) and 34–35 (HS). Histidine 42 lines the a divalent metal cation pocket. 4-CDP-2-C-methyl-D-erythritol 2-phosphate is bound by residues 56 to 58 (DIG), 61 to 65 (FPDTD), 100 to 106 (AQAPKMA), 132 to 135 (TTTE), phenylalanine 139, and arginine 142.

The protein belongs to the IspF family. Homotrimer. Requires a divalent metal cation as cofactor.

It carries out the reaction 4-CDP-2-C-methyl-D-erythritol 2-phosphate = 2-C-methyl-D-erythritol 2,4-cyclic diphosphate + CMP. It participates in isoprenoid biosynthesis; isopentenyl diphosphate biosynthesis via DXP pathway; isopentenyl diphosphate from 1-deoxy-D-xylulose 5-phosphate: step 4/6. Its function is as follows. Involved in the biosynthesis of isopentenyl diphosphate (IPP) and dimethylallyl diphosphate (DMAPP), two major building blocks of isoprenoid compounds. Catalyzes the conversion of 4-diphosphocytidyl-2-C-methyl-D-erythritol 2-phosphate (CDP-ME2P) to 2-C-methyl-D-erythritol 2,4-cyclodiphosphate (ME-CPP) with a corresponding release of cytidine 5-monophosphate (CMP). This chain is 2-C-methyl-D-erythritol 2,4-cyclodiphosphate synthase, found in Pseudomonas fluorescens (strain SBW25).